A 202-amino-acid polypeptide reads, in one-letter code: Secreted RxLR effector protein 93 (202 aa).

An N-terminal signal peptide occupies residues 1 to 16 (MRFYLTKLFAAAGALA). A disordered region spans residues 29–58 (TPVSPLSRSSDHHQSDDSTQRRLRTLNGAD). A compositionally biased stretch (basic and acidic residues) spans 37-48 (SSDHHQSDDSTQ). Positions 49–61 (RRLRTLNGADEER) match the RxLR-dEER motif.

Belongs to the RxLR effector family.

The protein localises to the secreted. Its subcellular location is the host nucleus. Its function is as follows. Secreted effector that completely suppresses the host cell death induced by cell death-inducing proteins. In Plasmopara viticola (Downy mildew of grapevine), this protein is Secreted RxLR effector protein 93.